A 991-amino-acid chain; its full sequence is UPF0182 protein RHA1_ro08670 (991 aa).

The next 7 helical transmembrane spans lie at 16 to 36 (VMIM…RLVV), 61 to 81 (LILF…AVVW), 115 to 135 (FTVG…QASW), 170 to 190 (LILA…LGTH), 214 to 234 (VQLA…YWLD), 263 to 283 (RLIM…AIAV), and 291 to 311 (MATA…PALI). Residues 902–940 (TGAVATAPGGDATTPPPTGGQPPAPPPPGAPPAPPPATS) are disordered. A compositionally biased stretch (low complexity) spans 903 to 914 (GAVATAPGGDAT). A compositionally biased stretch (pro residues) spans 915 to 938 (TPPPTGGQPPAPPPPGAPPAPPPA).

Belongs to the UPF0182 family.

It is found in the cell membrane. This chain is UPF0182 protein RHA1_ro08670, found in Rhodococcus jostii (strain RHA1).